Consider the following 123-residue polypeptide: Undecaprenol kinase (123 aa).

At 1 to 33 (MDSKDHRNELNRFFKSFVHAGRGIWETARTERN) the chain is on the cytoplasmic side. The helical transmembrane segment at 34–51 (FQFHAAAACAVLICGFLV) threads the bilayer. Over 52 to 57 (ELSIIE) the chain is Extracellular. The helical transmembrane segment at 58-74 (WMIIFLLIGGMFSLELL) threads the bilayer. Residues 75–99 (NTAIEHTVDLITDKHHPLAKAAKDA) are Cytoplasmic-facing. The helical transmembrane segment at 100–120 (AAGAVCVFAVISCIIGLLIFL) threads the bilayer. Over 121–123 (PKL) the chain is Extracellular.

This sequence belongs to the bacterial diacylglycerol kinase family.

The protein localises to the cell membrane. It catalyses the reaction di-trans,octa-cis-undecaprenol + ATP = di-trans,octa-cis-undecaprenyl phosphate + ADP + H(+). In terms of biological role, catalyzes the phosphorylation of undecaprenol in vitro, which is probably the physiological substrate. Exhibits no detectable activity against other substrates such as monoacylglycerol, ceramide, or diacylglycerol (DAG). Appears indispensable for the maintenance of spore stability and viability in B.subtilis. The protein is Undecaprenol kinase (dgkA) of Bacillus subtilis (strain 168).